A 286-amino-acid chain; its full sequence is uncharacterized protein (286 aa).

This sequence belongs to the chlamydial CPn_0389/CT_041/TC_0311 family.

This is an uncharacterized protein from Chlamydia muridarum (strain MoPn / Nigg).